Consider the following 286-residue polypeptide: Digeranylgeranylglyceryl phosphate synthase (286 aa).

8 helical membrane-spanning segments follow: residues alanine 21–threonine 41, threonine 42–isoleucine 62, phenylalanine 96–alanine 116, leucine 133–alanine 155, phenylalanine 162–isoleucine 181, valine 214–tryptophan 234, tyrosine 235–aspartate 255, and arginine 266–isoleucine 286.

Belongs to the UbiA prenyltransferase family. DGGGP synthase subfamily. Mg(2+) serves as cofactor.

The protein resides in the cell membrane. The enzyme catalyses sn-3-O-(geranylgeranyl)glycerol 1-phosphate + (2E,6E,10E)-geranylgeranyl diphosphate = 2,3-bis-O-(geranylgeranyl)-sn-glycerol 1-phosphate + diphosphate. Its pathway is membrane lipid metabolism; glycerophospholipid metabolism. In terms of biological role, prenyltransferase that catalyzes the transfer of the geranylgeranyl moiety of geranylgeranyl diphosphate (GGPP) to the C2 hydroxyl of (S)-3-O-geranylgeranylglyceryl phosphate (GGGP). This reaction is the second ether-bond-formation step in the biosynthesis of archaeal membrane lipids. In Haloquadratum walsbyi (strain DSM 16790 / HBSQ001), this protein is Digeranylgeranylglyceryl phosphate synthase.